Here is a 670-residue protein sequence, read N- to C-terminus: Probable potassium transport system protein Kup 1 (670 aa).

The next 13 membrane-spanning stretches (helical) occupy residues 14–34 (GAGFIIAMGIVYGDIGTSPLY), 58–78 (LSLIIWTLTLITTVKYVWIAL), 101–121 (WLIIPAMIGGAALLSDGALTP), 147–167 (LPIVIITLAILAVLFLIQRFG), 175–195 (FGPVMFIWFSFLGITGLINLF), 196–216 (GDFSVLQAINPYWAIHLLLSP), 220–240 (AGIFVLGSVFLATTGAEALYS), 252–272 (VSWPFVKVCIILSYCGQGAWL), 294–314 (LIIFSVILATLAAIIASQALI), 345–365 (LYIPAVNLGLWLAASFIVVYF), 374–394 (AYGLAITVTMLMTTTLLTVYL), 403–423 (VLVGLFFTVFIFIEGLFFAAS), and 427–447 (FMHGGYVVVIIAAMILFVMAI).

The protein belongs to the HAK/KUP transporter (TC 2.A.72) family.

It localises to the cell membrane. It catalyses the reaction K(+)(in) + H(+)(in) = K(+)(out) + H(+)(out). Its function is as follows. Transport of potassium into the cell. Likely operates as a K(+):H(+) symporter. The protein is Probable potassium transport system protein Kup 1 of Lactococcus lactis subsp. lactis (strain IL1403) (Streptococcus lactis).